The following is a 534-amino-acid chain: Prolyl 4-hydroxylase subunit alpha-1 (534 aa).

Residues methionine 1–alanine 17 form the signal peptide. A glycan (N-linked (GlcNAc...) asparagine) is linked at asparagine 113. A TPR repeat occupies valine 205 to histidine 238. An N-linked (GlcNAc...) asparagine glycan is attached at asparagine 259. The Fe2OG dioxygenase domain occupies threonine 411 to glutamate 519. Positions 429, 431, and 500 each coordinate Fe cation. Lysine 510 provides a ligand contact to 2-oxoglutarate.

Belongs to the P4HA family. As to quaternary structure, heterotetramer of two alpha-1 chains and two beta chains (P4HB)(the beta chain is the multi-functional PDI), where P4HB plays the role of a structural subunit; this tetramer catalyzes the formation of 4-hydroxyproline in collagen. Fe(2+) serves as cofactor. Requires L-ascorbate as cofactor. Expressed at least in brain, heart and lung.

It is found in the endoplasmic reticulum lumen. The catalysed reaction is L-prolyl-[collagen] + 2-oxoglutarate + O2 = trans-4-hydroxy-L-prolyl-[collagen] + succinate + CO2. Inhibited by poly(L-proline). Catalyzes the post-translational formation of 4-hydroxyproline in -Xaa-Pro-Gly- sequences in collagens and other proteins. This is Prolyl 4-hydroxylase subunit alpha-1 (P4ha1) from Mus musculus (Mouse).